Here is a 266-residue protein sequence, read N- to C-terminus: 4-hydroxy-tetrahydrodipicolinate reductase (266 aa).

Residues 8-13 (GAAGRM) and glutamate 33 each bind NAD(+). NADP(+) is bound at residue arginine 34. NAD(+) is bound by residues 97–99 (GST) and 121–124 (APNM). Histidine 154 serves as the catalytic Proton donor/acceptor. Histidine 155 lines the (S)-2,3,4,5-tetrahydrodipicolinate pocket. Catalysis depends on lysine 158, which acts as the Proton donor. A (S)-2,3,4,5-tetrahydrodipicolinate-binding site is contributed by 164 to 165 (GT).

It belongs to the DapB family.

The protein localises to the cytoplasm. It catalyses the reaction (S)-2,3,4,5-tetrahydrodipicolinate + NAD(+) + H2O = (2S,4S)-4-hydroxy-2,3,4,5-tetrahydrodipicolinate + NADH + H(+). The catalysed reaction is (S)-2,3,4,5-tetrahydrodipicolinate + NADP(+) + H2O = (2S,4S)-4-hydroxy-2,3,4,5-tetrahydrodipicolinate + NADPH + H(+). It functions in the pathway amino-acid biosynthesis; L-lysine biosynthesis via DAP pathway; (S)-tetrahydrodipicolinate from L-aspartate: step 4/4. Catalyzes the conversion of 4-hydroxy-tetrahydrodipicolinate (HTPA) to tetrahydrodipicolinate. This is 4-hydroxy-tetrahydrodipicolinate reductase from Geobacter metallireducens (strain ATCC 53774 / DSM 7210 / GS-15).